The sequence spans 501 residues: ATP synthase subunit alpha (501 aa).

169 to 176 (GDRQTGKT) is an ATP binding site.

The protein belongs to the ATPase alpha/beta chains family. As to quaternary structure, F-type ATPases have 2 components, CF(1) - the catalytic core - and CF(0) - the membrane proton channel. CF(1) has five subunits: alpha(3), beta(3), gamma(1), delta(1), epsilon(1). CF(0) has three main subunits: a(1), b(2) and c(9-12). The alpha and beta chains form an alternating ring which encloses part of the gamma chain. CF(1) is attached to CF(0) by a central stalk formed by the gamma and epsilon chains, while a peripheral stalk is formed by the delta and b chains.

The protein localises to the cell membrane. It carries out the reaction ATP + H2O + 4 H(+)(in) = ADP + phosphate + 5 H(+)(out). In terms of biological role, produces ATP from ADP in the presence of a proton gradient across the membrane. The alpha chain is a regulatory subunit. This is ATP synthase subunit alpha from Streptococcus equi subsp. zooepidemicus (strain H70).